A 179-amino-acid polypeptide reads, in one-letter code: Lebocin-4 (179 aa).

An N-terminal signal peptide occupies residues 1-16 (MYKFLVFSSVLVLFFA). A propeptide spanning residues 17-120 (QASCQRFIQP…RPIESHRNTR (104 aa)) is cleaved from the precursor. O-linked (GalNAc...) threonine glycosylation is present at T135. Positions 153-179 (RRHASDDQEELRHHNEHFLIPRDILQD) are excised as a propeptide.

It belongs to the lebocin family. In terms of processing, O-glycosylation is important for the antibacterial activity of lebocin. Hemolymph. Produced in fat body.

Its subcellular location is the secreted. Its function is as follows. Antibacterial peptide. The chain is Lebocin-4 (LEB4) from Bombyx mori (Silk moth).